The chain runs to 416 residues: Serine hydroxymethyltransferase (416 aa).

Residues L118 and 122 to 124 contribute to the (6S)-5,6,7,8-tetrahydrofolate site; that span reads GHL. Residue K226 is modified to N6-(pyridoxal phosphate)lysine. Position 242 (E242) interacts with (6S)-5,6,7,8-tetrahydrofolate.

The protein belongs to the SHMT family. Homodimer. Pyridoxal 5'-phosphate is required as a cofactor.

The protein localises to the cytoplasm. The enzyme catalyses (6R)-5,10-methylene-5,6,7,8-tetrahydrofolate + glycine + H2O = (6S)-5,6,7,8-tetrahydrofolate + L-serine. The protein operates within one-carbon metabolism; tetrahydrofolate interconversion. Its pathway is amino-acid biosynthesis; glycine biosynthesis; glycine from L-serine: step 1/1. Catalyzes the reversible interconversion of serine and glycine with tetrahydrofolate (THF) serving as the one-carbon carrier. This reaction serves as the major source of one-carbon groups required for the biosynthesis of purines, thymidylate, methionine, and other important biomolecules. Also exhibits THF-independent aldolase activity toward beta-hydroxyamino acids, producing glycine and aldehydes, via a retro-aldol mechanism. This is Serine hydroxymethyltransferase from Helicobacter pylori (strain J99 / ATCC 700824) (Campylobacter pylori J99).